The following is a 182-amino-acid chain: Peptidyl-tRNA hydrolase (182 aa).

Y14 is a binding site for tRNA. Residue H19 is the Proton acceptor of the active site. TRNA contacts are provided by Y65, N67, and N113.

Belongs to the PTH family. As to quaternary structure, monomer.

It is found in the cytoplasm. The enzyme catalyses an N-acyl-L-alpha-aminoacyl-tRNA + H2O = an N-acyl-L-amino acid + a tRNA + H(+). Hydrolyzes ribosome-free peptidyl-tRNAs (with 1 or more amino acids incorporated), which drop off the ribosome during protein synthesis, or as a result of ribosome stalling. In terms of biological role, catalyzes the release of premature peptidyl moieties from peptidyl-tRNA molecules trapped in stalled 50S ribosomal subunits, and thus maintains levels of free tRNAs and 50S ribosomes. This Rickettsia peacockii (strain Rustic) protein is Peptidyl-tRNA hydrolase.